The following is a 97-amino-acid chain: Co-chaperonin GroES (97 aa).

Belongs to the GroES chaperonin family. As to quaternary structure, heptamer of 7 subunits arranged in a ring. Interacts with the chaperonin GroEL.

It localises to the cytoplasm. In terms of biological role, together with the chaperonin GroEL, plays an essential role in assisting protein folding. The GroEL-GroES system forms a nano-cage that allows encapsulation of the non-native substrate proteins and provides a physical environment optimized to promote and accelerate protein folding. GroES binds to the apical surface of the GroEL ring, thereby capping the opening of the GroEL channel. The polypeptide is Co-chaperonin GroES (Pseudomonas fluorescens (strain Pf0-1)).